The sequence spans 772 residues: Carnitine O-palmitoyltransferase 1, muscle isoform (772 aa).

Residues 1-47 (MAEAHQAVAFQFTVTPDGVDFRLSREALRHIYLSGINSWKKRLIRIK) lie on the Cytoplasmic side of the membrane. A helical transmembrane segment spans residues 48–73 (NGILRGVYPGSPTSWLVVVMATVGSN). Over 74–102 (YCKVDISMGLVHCIQRCLPTRYGSYGTPQ) the chain is Mitochondrial intermembrane. Residues 103–122 (TETLLSMVIFSTGVWATGIF) form a helical membrane-spanning segment. Over 123 to 772 (LFRQTLKLLL…DLFKISKTDS (650 aa)) the chain is Cytoplasmic. Histidine 473 acts as the Proton acceptor in catalysis. 555 to 567 (GKGLIKKCRTSPD) is a binding site for CoA. (R)-carnitine contacts are provided by tyrosine 589 and threonine 602.

The protein belongs to the carnitine/choline acetyltransferase family. In terms of tissue distribution, high expression in heart, skeletal muscle and brown adipose tissue. Also expressed in white adipose tissue, but not in liver.

The protein localises to the mitochondrion outer membrane. It catalyses the reaction (R)-carnitine + hexadecanoyl-CoA = O-hexadecanoyl-(R)-carnitine + CoA. It functions in the pathway lipid metabolism; fatty acid beta-oxidation. In terms of biological role, catalyzes the transfer of the acyl group of long-chain fatty acid-CoA conjugates onto carnitine, an essential step for the mitochondrial uptake of long-chain fatty acids and their subsequent beta-oxidation in the mitochondrion. The polypeptide is Carnitine O-palmitoyltransferase 1, muscle isoform (Cpt1b) (Rattus norvegicus (Rat)).